The sequence spans 1828 residues: MSTRSIVTSKVSWTPEKFISALSYPEHCSITLVKRLKASVKLKDLKQNISRDAPSWTFEHLFVAFKCAVSNLAKQWAELSTTDKEKTRRMFCTPSRLNTAHRPEVFYLLECCTYILEQMQVVTKNTSHLYDCIRSGVSICNRLLDMEIFEPAISLLMKTHKNLIILLTYRDHDAIPTATLLNPTLDVSEIQLESCLFVPMVPASYFLNIGTIVVTFQLNVLRCLSLSQINGLSLNTINNLQSEDGPFQWIERSFPSQVQLANSRREILARLLTRFSMIQNNALQSFKLLILSIALWLNILSSQRADDKEFDVNQLETRILQLFSKVVQLCKSEDIEGSILNKDMTQLHHLLENLSKESRLHILLQLSQLYYKYNDFQLSAAYVIRGYSLSFEDISFKLKFLLFSFRLSIHDNSICFPFNLIQELSSLQQLFVENALPYSEALHLLDSIERSFRLFNDSTVFDDTVFALNISEILSWILSSVVRDILVEDELLNLQLKIRKFLMFTFHIIRSFSELTKFQSSLEGCLNLAAYYEDAEFPQKLSNHLYNLCVKSSNVNYARECISLSIKIAVSHKLTNDETYLLKILKNFQLRYHDSLQLQEKCDVLHTTFNQLDLYVGTTSVGKSSVLDNILKRIFNSLTSINDSNIEKLLESISYSLLKLFFKCANEGSRYNASAALSFKLSLMLHEKEEVLLLKTNVSCVLANHGYNDIKFEEMVLCVIKGDQNLLEHNSNNNAKLALNESLLCSWENLLCYRRAEDDSRILTIIESWTIFISRFSSVISRCSFTDFEINSILNFFFCFLHTVEPSGKLTFELAFLEIFYELFNCLLHLQFSKYLVIIGTLLSDKYMTLGFSGKAHLFYTKCYSYLRQCKSSPFINFWNVSYGKYLILTGNTDKGILQLKKYSLSSEEDFNSNGLSRTVSLNLLLYERIQLSDALFQLGYTTVSLGFIMQNLKVIKGLFSKSSKEHFNGGKYITWRLFAVSAHSNVCAARIYEHMGQAREAEFFYRQACSISEKMPFSCFSATFQLRLCSLLTRAGKLEKGEKILFDLTEAMKSTDTYHKLLWNYGAAEVCATKSELDGAICHYSECVKLLEIIKSEYYLFFNRNREKSLTKGIKRLSLSSQPTFVTESNTTEFDDWSILQNTAANLLRLISMFELKRGNLEIAKALMTDSTKCSIASFFNIVSANILKSKLIVCEADSTLFGDPVLRTLPDSVISLPGISHKFQKNQSKTKALGENTGFRKGSKRLDYLRERLKINLQNVRLSCEIIFSNAYERSSVCVCREVNELISYSTIMQSALTTIGETTDVDSSSASFFLEIPKALGFHRRREAQKFRNQHKELHFSSLEQILNSRLSIPDVRTFQDNFIDSLPSIWNVVSITINNSGEDLFISKIRKGHSPLIFRLPLQRHNSRDADEEILVFTKAQTELFRIISKSNQMAQNGKHYTRREDKETWWKERRHLDQCLQQLLENIEISWLGGFKGIFNPHKIDTSLFAKFSSQFQNIIAKNFNMDKKTPVPTLSPEILELFITLGKPGYEGYEQLLEDLIYFILDIFQFRGLHFAYDEIDTDQLSMDLQDALNAYFNNYVSEENRSHTVLVLDKSVHQFPWESLPCLNRQSVSRVPSLSILRDILSQSFVVNGEYVEVRKEAGSYILNPSLDLKHTQEMFEHKLVEGGWKGLIASQPSNRDFIKMLSGNDFFLYFGHGGGEQYTTSYDLATLKRCAVTILMGCSSGALYECGSFEPWGTPLDYLSAGCPTLVANLWDVTDKDIDRFSLKMLESWGLFENKAPFVNSTSICTAVSESRSCCHLRYLNGAAPVIYGIPAYIIP.

The Peptidase C50 domain occupies 1647–1741 (KEAGSYILNP…SGALYECGSF (95 aa)). Residue Cys1730 is part of the active site.

Interacts with cut2. Interacts with rad21.

The protein resides in the cytoplasm. Its subcellular location is the nucleus. The enzyme catalyses All bonds known to be hydrolyzed by this endopeptidase have arginine in P1 and an acidic residue in P4. P6 is often occupied by an acidic residue or by a hydroxy-amino-acid residue, the phosphorylation of which enhances cleavage.. With respect to regulation, it is inactivated via its interaction with cut2, which probably covers its active site. Cut2 degradation at anaphase, liberates it and triggers rad21 cleavage. Its function is as follows. Caspase-like protease, which plays a central role in the chromosome segregation by cleaving the rad21 subunit of the cohesin complex at the onset of anaphase. During most of the cell cycle, it is inactivated by securin/cut2 protein. It is also required for pointed nuclear formation. The protein is Separin (cut1) of Schizosaccharomyces pombe (strain 972 / ATCC 24843) (Fission yeast).